Here is a 178-residue protein sequence, read N- to C-terminus: uncharacterized protein (178 aa).

The next 5 membrane-spanning stretches (helical) occupy residues 13 to 33 (GIVL…FFMP), 48 to 68 (MLNA…LIMI), 80 to 100 (ILAA…YHSI), 115 to 135 (IYFF…PLAL), and 155 to 175 (WTMP…LMIS).

Its subcellular location is the cell membrane. This is an uncharacterized protein from Bacillus subtilis (strain 168).